A 27-amino-acid chain; its full sequence is Protein YkiD (27 aa).

This is Protein YkiD from Escherichia coli (strain K12).